The following is a 456-amino-acid chain: MSEEESQKTIGIVGAGLVGCLAALAFAKKGYDVTLFEYRPDPRTVDSSKRNLRSINLAVSSRGIRALQYVDPAMADRILEHVIPMKGRMIHDITGTKQESQVYGLNGESINSIDRSFLNNCLLDELDKSNVKILFKHKLVKLDTSNACRMTFIDGHNDAKTSTFDFVVGCDGAHSQFRYHLQKTMRMDYSQKYIDMQYLELYIPPSEDANNKFSIDANHLHIWPRHNFMLIALANKDGSFTSTFFSPWSVIEGISSSQEFVEFFRHNFPDAVGLIGEDALSSAFKSNPRGSLMQVSCYPYSNGKGIILGDAAHSMVPFYGQGMNCGFEDVRILMELIDTNNGDIEEAFKQYSAARKNDLDAICKLALDNYYEMSSKVVDIGYLIKKKLDYTLGKIFKNKWLPLYTMISFRDDIPYAKAIEIEKRQNRIMNNVGLGVLGTAAVYGLVKLGQYWNRRQ.

Belongs to the aromatic-ring hydroxylase family. KMO subfamily. FAD serves as cofactor.

It localises to the mitochondrion outer membrane. The catalysed reaction is L-kynurenine + NADPH + O2 + H(+) = 3-hydroxy-L-kynurenine + NADP(+) + H2O. The protein operates within cofactor biosynthesis; NAD(+) biosynthesis; quinolinate from L-kynurenine: step 1/3. In terms of biological role, catalyzes the hydroxylation of L-kynurenine (L-Kyn) to form 3-hydroxy-L-kynurenine (L-3OHKyn). Required for synthesis of quinolinic acid. The polypeptide is Kynurenine 3-monooxygenase (Candida albicans (strain SC5314 / ATCC MYA-2876) (Yeast)).